A 196-amino-acid polypeptide reads, in one-letter code: ATP synthase subunit b 2 (196 aa).

The span at 1-18 (MVVAQAGAPAHPPAAHGA) shows a compositional bias: low complexity. The tract at residues 1–33 (MVVAQAGAPAHPPAAHGAEAGHGEAAGGEHGGF) is disordered. A helical transmembrane segment spans residues 41–60 (FASQLIWLIVSFGALYFLMS).

The protein belongs to the ATPase B chain family. As to quaternary structure, F-type ATPases have 2 components, F(1) - the catalytic core - and F(0) - the membrane proton channel. F(1) has five subunits: alpha(3), beta(3), gamma(1), delta(1), epsilon(1). F(0) has three main subunits: a(1), b(2) and c(10-14). The alpha and beta chains form an alternating ring which encloses part of the gamma chain. F(1) is attached to F(0) by a central stalk formed by the gamma and epsilon chains, while a peripheral stalk is formed by the delta and b chains.

It is found in the cell inner membrane. Functionally, f(1)F(0) ATP synthase produces ATP from ADP in the presence of a proton or sodium gradient. F-type ATPases consist of two structural domains, F(1) containing the extramembraneous catalytic core and F(0) containing the membrane proton channel, linked together by a central stalk and a peripheral stalk. During catalysis, ATP synthesis in the catalytic domain of F(1) is coupled via a rotary mechanism of the central stalk subunits to proton translocation. In terms of biological role, component of the F(0) channel, it forms part of the peripheral stalk, linking F(1) to F(0). The b'-subunit is a diverged and duplicated form of b found in plants and photosynthetic bacteria. The sequence is that of ATP synthase subunit b 2 (atpF2) from Azorhizobium caulinodans (strain ATCC 43989 / DSM 5975 / JCM 20966 / LMG 6465 / NBRC 14845 / NCIMB 13405 / ORS 571).